A 550-amino-acid chain; its full sequence is Chaperonin GroEL 1 (550 aa).

ATP is bound by residues 29–32 (TIGP), 86–90 (DGTTT), Gly413, 477–479 (NAA), and Asp493. Residues 524-550 (AVSDGDHGHSHGHGHSHGHSHPQGPGF) form a disordered region. Residues 533-543 (SHGHGHSHGHS) show a composition bias toward basic residues.

Belongs to the chaperonin (HSP60) family. As to quaternary structure, forms a cylinder of 14 subunits composed of two heptameric rings stacked back-to-back. Interacts with the co-chaperonin GroES.

Its subcellular location is the cytoplasm. It carries out the reaction ATP + H2O + a folded polypeptide = ADP + phosphate + an unfolded polypeptide.. Together with its co-chaperonin GroES, plays an essential role in assisting protein folding. The GroEL-GroES system forms a nano-cage that allows encapsulation of the non-native substrate proteins and provides a physical environment optimized to promote and accelerate protein folding. This Frankia alni (strain DSM 45986 / CECT 9034 / ACN14a) protein is Chaperonin GroEL 1.